A 304-amino-acid polypeptide reads, in one-letter code: Aspartate carbamoyltransferase catalytic subunit (304 aa).

2 residues coordinate carbamoyl phosphate: Arg-49 and Thr-50. Residue Lys-77 coordinates L-aspartate. Residues Arg-99, His-127, and Gln-130 each contribute to the carbamoyl phosphate site. L-aspartate-binding residues include Arg-160 and Arg-211. Ala-250 and Pro-251 together coordinate carbamoyl phosphate. Position 303 is a phosphoserine (Ser-303).

The protein belongs to the aspartate/ornithine carbamoyltransferase superfamily. ATCase family. As to quaternary structure, heterododecamer (2C3:3R2) of six catalytic PyrB chains organized as two trimers (C3), and six regulatory PyrI chains organized as three dimers (R2).

The enzyme catalyses carbamoyl phosphate + L-aspartate = N-carbamoyl-L-aspartate + phosphate + H(+). It participates in pyrimidine metabolism; UMP biosynthesis via de novo pathway; (S)-dihydroorotate from bicarbonate: step 2/3. Catalyzes the condensation of carbamoyl phosphate and aspartate to form carbamoyl aspartate and inorganic phosphate, the committed step in the de novo pyrimidine nucleotide biosynthesis pathway. This Bacillus subtilis (strain 168) protein is Aspartate carbamoyltransferase catalytic subunit.